The chain runs to 308 residues: tRNA pseudouridine synthase B (308 aa).

Residue aspartate 49 is the Nucleophile of the active site.

Belongs to the pseudouridine synthase TruB family. Type 1 subfamily.

It carries out the reaction uridine(55) in tRNA = pseudouridine(55) in tRNA. In terms of biological role, responsible for synthesis of pseudouridine from uracil-55 in the psi GC loop of transfer RNAs. This Nitrosococcus oceani (strain ATCC 19707 / BCRC 17464 / JCM 30415 / NCIMB 11848 / C-107) protein is tRNA pseudouridine synthase B.